Here is a 356-residue protein sequence, read N- to C-terminus: Nicotinate-nucleotide--dimethylbenzimidazole phosphoribosyltransferase (356 aa).

The active-site Proton acceptor is glutamate 317.

It belongs to the CobT family. As to quaternary structure, homodimer.

The catalysed reaction is 5,6-dimethylbenzimidazole + nicotinate beta-D-ribonucleotide = alpha-ribazole 5'-phosphate + nicotinate + H(+). The protein operates within nucleoside biosynthesis; alpha-ribazole biosynthesis; alpha-ribazole from 5,6-dimethylbenzimidazole: step 1/2. Functionally, catalyzes the synthesis of alpha-ribazole-5'-phosphate from nicotinate mononucleotide (NAMN) and 5,6-dimethylbenzimidazole (DMB). This chain is Nicotinate-nucleotide--dimethylbenzimidazole phosphoribosyltransferase, found in Salmonella schwarzengrund (strain CVM19633).